Reading from the N-terminus, the 205-residue chain is ATP-dependent Clp protease proteolytic subunit (205 aa).

Residue S101 is the Nucleophile of the active site. H126 is a catalytic residue.

This sequence belongs to the peptidase S14 family. Component of the chloroplastic Clp protease core complex.

Its subcellular location is the plastid. It is found in the chloroplast stroma. It catalyses the reaction Hydrolysis of proteins to small peptides in the presence of ATP and magnesium. alpha-casein is the usual test substrate. In the absence of ATP, only oligopeptides shorter than five residues are hydrolyzed (such as succinyl-Leu-Tyr-|-NHMec, and Leu-Tyr-Leu-|-Tyr-Trp, in which cleavage of the -Tyr-|-Leu- and -Tyr-|-Trp bonds also occurs).. Functionally, cleaves peptides in various proteins in a process that requires ATP hydrolysis. Has a chymotrypsin-like activity. Plays a major role in the degradation of misfolded proteins. The sequence is that of ATP-dependent Clp protease proteolytic subunit from Pinus contorta (Shore pine).